We begin with the raw amino-acid sequence, 80 residues long: Acyl carrier protein (80 aa).

The 79-residue stretch at 1–79 (MSQEEILQKV…DAVKFIEAKK (79 aa)) folds into the Carrier domain. Ser39 is modified (O-(pantetheine 4'-phosphoryl)serine).

It belongs to the acyl carrier protein (ACP) family. Post-translationally, 4'-phosphopantetheine is transferred from CoA to a specific serine of apo-ACP by AcpS. This modification is essential for activity because fatty acids are bound in thioester linkage to the sulfhydryl of the prosthetic group.

The protein localises to the cytoplasm. The protein operates within lipid metabolism; fatty acid biosynthesis. Functionally, carrier of the growing fatty acid chain in fatty acid biosynthesis. In Prochlorococcus marinus (strain MIT 9515), this protein is Acyl carrier protein.